The primary structure comprises 132 residues: UPF0102 protein Ajs_0414 (132 aa).

The disordered stretch occupies residues 1-23 (MGFLGKKVNGSAPARTTRAAGQA).

This sequence belongs to the UPF0102 family.

This chain is UPF0102 protein Ajs_0414, found in Acidovorax sp. (strain JS42).